The sequence spans 289 residues: T-cell ecto-ADP-ribosyltransferase 2 (289 aa).

The signal sequence occupies residues 1 to 20 (MTSKIFKFFLTWWLTQQVTG). 2 disulfides stabilise this stretch: C41-C246 and C141-C193. Positions 61–241 (EELKLEWEKA…IFLDSPERKK (181 aa)) constitute a TR mART core domain. Residue N79 is glycosylated (N-linked (GlcNAc...) asparagine). NAD(+) is bound by residues Y98, R146, and Q164. Residue R146 is part of the active site. The active site involves S167. S202 serves as a coordination point for NAD(+). E209 is a catalytic residue. The N-linked (GlcNAc...) asparagine glycan is linked to N249. Residue S260 is the site of GPI-anchor amidated serine attachment. The propeptide at 261–289 (ISGSRESCVSLFLVVLLGLLVQQLTLAEL) is removed in mature form.

It belongs to the Arg-specific ADP-ribosyltransferase family. As to expression, expressed in spleen, intestine and thymus.

Its subcellular location is the cell membrane. It carries out the reaction L-arginyl-[protein] + NAD(+) = N(omega)-(ADP-D-ribosyl)-L-arginyl-[protein] + nicotinamide + H(+). It catalyses the reaction NAD(+) + H2O = ADP-D-ribose + nicotinamide + H(+). Has both NAD(+) glycohydrolase and ADP-ribosyltransferase activity. This chain is T-cell ecto-ADP-ribosyltransferase 2 (Art2b), found in Mus musculus (Mouse).